We begin with the raw amino-acid sequence, 197 residues long: MAVRPIRIVGDPVLHTATEPVPVGADGSLPADLADLITDMYDTMDAAHGVGLAANQIGVSKRVFVYDCADERKKTTRRRGVVINPVLETSEIPETMPDPEDDDEGCLSVPGESFPTGRADWARVTGLDADGTPITLEGTDLFARMLQHETGHLDGFLYLDRLIGRNARSAKKTVKSHGWGVPGLSWMPGEDPDPFGH.

Residues cysteine 106 and histidine 148 each contribute to the Fe cation site. Residue glutamate 149 is part of the active site. Fe cation is bound at residue histidine 152.

Belongs to the polypeptide deformylase family. Requires Fe(2+) as cofactor.

It catalyses the reaction N-terminal N-formyl-L-methionyl-[peptide] + H2O = N-terminal L-methionyl-[peptide] + formate. Its function is as follows. Removes the formyl group from the N-terminal Met of newly synthesized proteins. Requires at least a dipeptide for an efficient rate of reaction. N-terminal L-methionine is a prerequisite for activity but the enzyme has broad specificity at other positions. The sequence is that of Peptide deformylase from Mycolicibacterium vanbaalenii (strain DSM 7251 / JCM 13017 / BCRC 16820 / KCTC 9966 / NRRL B-24157 / PYR-1) (Mycobacterium vanbaalenii).